Reading from the N-terminus, the 342-residue chain is DNA-directed RNA polymerase subunit alpha (342 aa).

The tract at residues 1-239 (MTTFLAKNWS…DQLQVFINFQ (239 aa)) is alpha N-terminal domain (alpha-NTD). An alpha C-terminal domain (alpha-CTD) region spans residues 254 to 342 (INPVLLKKVY…SLAKKHEDQY (89 aa)).

Belongs to the RNA polymerase alpha chain family. Homodimer. The RNAP catalytic core consists of 2 alpha, 1 beta, 1 beta' and 1 omega subunit. When a sigma factor is associated with the core the holoenzyme is formed, which can initiate transcription.

The catalysed reaction is RNA(n) + a ribonucleoside 5'-triphosphate = RNA(n+1) + diphosphate. DNA-dependent RNA polymerase catalyzes the transcription of DNA into RNA using the four ribonucleoside triphosphates as substrates. The sequence is that of DNA-directed RNA polymerase subunit alpha from Orientia tsutsugamushi (strain Boryong) (Rickettsia tsutsugamushi).